A 185-amino-acid chain; its full sequence is Peptide deformylase (185 aa).

Fe cation-binding residues include cysteine 98 and histidine 140. Glutamate 141 is a catalytic residue. Residue histidine 144 coordinates Fe cation.

Belongs to the polypeptide deformylase family. It depends on Fe(2+) as a cofactor.

It carries out the reaction N-terminal N-formyl-L-methionyl-[peptide] + H2O = N-terminal L-methionyl-[peptide] + formate. In terms of biological role, removes the formyl group from the N-terminal Met of newly synthesized proteins. Requires at least a dipeptide for an efficient rate of reaction. N-terminal L-methionine is a prerequisite for activity but the enzyme has broad specificity at other positions. The protein is Peptide deformylase of Parabacteroides distasonis (strain ATCC 8503 / DSM 20701 / CIP 104284 / JCM 5825 / NCTC 11152).